The following is a 269-amino-acid chain: Indole-3-glycerol phosphate synthase 1 (269 aa).

The protein belongs to the TrpC family.

The enzyme catalyses 1-(2-carboxyphenylamino)-1-deoxy-D-ribulose 5-phosphate + H(+) = (1S,2R)-1-C-(indol-3-yl)glycerol 3-phosphate + CO2 + H2O. The protein operates within amino-acid biosynthesis; L-tryptophan biosynthesis; L-tryptophan from chorismate: step 4/5. The chain is Indole-3-glycerol phosphate synthase 1 (trpC1) from Streptomyces coelicolor (strain ATCC BAA-471 / A3(2) / M145).